The chain runs to 451 residues: tRNA pseudouridine synthase 2 (451 aa).

Positions 1-30 (MTSISKRKNQQEHIPAEDLETPKLPKREKI) are disordered. The segment covering 9–30 (NQQEHIPAEDLETPKLPKREKI) has biased composition (basic and acidic residues). The Nucleophile role is filled by aspartate 97. Tyrosine 157 is a substrate binding site.

This sequence belongs to the tRNA pseudouridine synthase TruA family. Zn(2+) is required as a cofactor.

The protein resides in the nucleus. It catalyses the reaction a uridine in tRNA = a pseudouridine in tRNA. Its function is as follows. Formation of pseudouridine at positions 27 and 28 in the anticodon stem and loop of transfer RNAs; at positions 34 and 36 of intron-containing precursor tRNA(Ile) and at position 35 in the intron-containing tRNA(Tyr). This Schizosaccharomyces pombe (strain 972 / ATCC 24843) (Fission yeast) protein is tRNA pseudouridine synthase 2 (pus2).